Reading from the N-terminus, the 147-residue chain is Histone H2B (147 aa).

A compositionally biased stretch (basic and acidic residues) spans 1–31 (MAPKAEKKPAEKKPAEEKKAVAEKAPAEKKP). Residues 1–55 (MAPKAEKKPAEKKPAEEKKAVAEKAPAEKKPKAGKKLPKEGGAAAGDKKKKRVKK) are disordered. 3 positions are modified to N6-acetyllysine: K7, K35, and K36. Residue K143 forms a Glycyl lysine isopeptide (Lys-Gly) (interchain with G-Cter in ubiquitin) linkage.

This sequence belongs to the histone H2B family. As to quaternary structure, the nucleosome is a histone octamer containing two molecules each of H2A, H2B, H3 and H4 assembled in one H3-H4 heterotetramer and two H2A-H2B heterodimers. The octamer wraps approximately 147 bp of DNA. Can be acetylated to form H2BK6ac, H2BK33ac and H2BK34ac. In terms of processing, monoubiquitinated to form H2BK143ub1; may give a specific tag for epigenetic transcriptional activation.

The protein resides in the nucleus. It is found in the chromosome. Its function is as follows. Core component of nucleosome. Nucleosomes wrap and compact DNA into chromatin, limiting DNA accessibility to the cellular machineries which require DNA as a template. Histones thereby play a central role in transcription regulation, DNA repair, DNA replication and chromosomal stability. DNA accessibility is regulated via a complex set of post-translational modifications of histones, also called histone code, and nucleosome remodeling. The polypeptide is Histone H2B (HIS2B) (Gossypium hirsutum (Upland cotton)).